The primary structure comprises 360 residues: DNA replication and repair protein RecF (360 aa).

33 to 40 (GENGSGKT) is a binding site for ATP.

It belongs to the RecF family.

Its subcellular location is the cytoplasm. In terms of biological role, the RecF protein is involved in DNA metabolism; it is required for DNA replication and normal SOS inducibility. RecF binds preferentially to single-stranded, linear DNA. It also seems to bind ATP. This is DNA replication and repair protein RecF from Rickettsia conorii (strain ATCC VR-613 / Malish 7).